The sequence spans 131 residues: Dihydroneopterin aldolase 2 (131 aa).

Substrate is bound by residues Glu29, Tyr61, and 80 to 81 (LE). Residue Lys107 is the Proton donor/acceptor of the active site.

The protein belongs to the DHNA family. Homooctamer. Forms a hollow cylinder assembled from two ring-shaped tetramers. Expressed in roots, leaves, stems and siliques.

The enzyme catalyses 7,8-dihydroneopterin = 6-hydroxymethyl-7,8-dihydropterin + glycolaldehyde. Its pathway is cofactor biosynthesis; tetrahydrofolate biosynthesis; 2-amino-4-hydroxy-6-hydroxymethyl-7,8-dihydropteridine diphosphate from 7,8-dihydroneopterin triphosphate: step 3/4. Catalyzes the conversion of 7,8-dihydroneopterin into 6-hydroxymethyl-7,8-dihydropterin, a biosynthetic precursor of the vitamin tetrahydrofolate. Can use L-threo-dihydroneopterin and D-erythro-dihydroneopterin as substrates for the formation of 6-hydroxymethyldihydropterin, but it can also catalyze the epimerization of carbon 2' of dihydroneopterin and dihydromonapterin. This chain is Dihydroneopterin aldolase 2, found in Arabidopsis thaliana (Mouse-ear cress).